A 3421-amino-acid polypeptide reads, in one-letter code: Large tegument protein deneddylase (3421 aa).

The interval 1–248 (MAQTLVPANK…SETYLSDEQY (248 aa)) is deubiquitination activity. The region spanning 19–238 (VVIGYRNQYD…ISATSLLYGI (220 aa)) is the Peptidase C76 domain. Residues Cys39, Asp172, and His174 contribute to the active site. Positions 311–351 (QPTEKRVSLPKRRRPPWTPPTSSENLTTSGNTHTVAGRPSQ) are disordered. The segment covering 332–344 (SSENLTTSGNTHT) has biased composition (polar residues). The interaction with inner tegument protein stretch occupies residues 482-508 (LEQFITMIFNRLLSFLVENGARTRTDS). Disordered stretches follow at residues 2407-2442 (ESNP…PTGI) and 2479-3195 (SNAM…RKNI). Residues 2415-2432 (SHDSSQSLDVPSSPSSGS) are compositionally biased toward low complexity. Composition is skewed to pro residues over residues 2506-2516 (TLPPKAAPLPP), 2541-2556 (PSVP…PPLP), 2565-2577 (GPPP…PPLP), 2586-2598 (GPPP…PPLP), and 2607-2619 (GPPP…PPLP). Composition is skewed to polar residues over residues 2620–2637 (QSTS…SGKT) and 2778–2787 (SDSNVTQSTK). Residues 2797 to 2857 (PAAAPAKSAA…SAAAPAAAPA (61 aa)) are compositionally biased toward low complexity. Residues 2869–2895 (KPAKDQAKDQAKDQAKDQAKDQAKDQA) are compositionally biased toward basic and acidic residues. Over residues 2953-2969 (LSASKNSHTTDAVSSDR) the composition is skewed to polar residues. 2 stretches are compositionally biased toward basic and acidic residues: residues 3023–3040 (RKSD…RRAF) and 3088–3097 (CSEEPKRPTG). Polar residues predominate over residues 3120 to 3146 (IPQNQNTSESPRTTSLKSPTRTVQSSM). The span at 3171–3188 (PQPPPANQTPPPQEPPAP) shows a compositional bias: pro residues.

Belongs to the herpesviridae large tegument protein family. In terms of assembly, interacts with host CUL1 and CUL4A; these interactions inhibit the E3 ligase activity of cullins. Interacts with inner tegument protein. Interacts with capsid vertex specific component CVC2. Interacts with the major capsid protein/MCP.

The protein resides in the virion tegument. The protein localises to the host cytoplasm. Its subcellular location is the host nucleus. The catalysed reaction is Thiol-dependent hydrolysis of ester, thioester, amide, peptide and isopeptide bonds formed by the C-terminal Gly of ubiquitin (a 76-residue protein attached to proteins as an intracellular targeting signal).. Its function is as follows. Large tegument protein that plays multiple roles in the viral cycle. During viral entry, remains associated with the capsid while most of the tegument is detached and participates in the capsid transport toward the host nucleus. Plays a role in the routing of the capsid at the nuclear pore complex and subsequent uncoating. Within the host nucleus, acts as a deneddylase and promotes the degradation of nuclear CRLs (cullin-RING ubiquitin ligases) and thereby stabilizes nuclear CRL substrates, while cytoplasmic CRLs remain unaffected. These modifications prevent host cell cycle S-phase progression and create a favorable environment allowing efficient viral genome replication. Participates later in the secondary envelopment of capsids. Indeed, plays a linker role for the association of the outer viral tegument to the capsids together with the inner tegument protein. This chain is Large tegument protein deneddylase, found in Equus caballus (Horse).